The sequence spans 709 residues: Myotubularin-related protein 11 (709 aa).

The segment at 1–39 (MWWGGRGQSFNIAPQKEEPEMGSVQENRMPEPRSRQPSS) is disordered. The region spanning 196 to 639 (METAEDWETE…PQIRLWRRCY (444 aa)) is the Myotubularin phosphatase domain.

The protein belongs to the protein-tyrosine phosphatase family. Non-receptor class myotubularin subfamily. As to expression, expressed in bone marrow, spleen and thymus.

This is Myotubularin-related protein 11 (MTMR11) from Homo sapiens (Human).